We begin with the raw amino-acid sequence, 368 residues long: uncharacterized protein (368 aa).

A Response regulatory domain is found at 3-120 (KILLADDERI…QIISSLEEII (118 aa)). The residue at position 55 (D55) is a 4-aspartylphosphate. An HTH araC/xylS-type domain is found at 259–361 (SKMIRLIADE…GLTPSEFRRK (103 aa)). 2 consecutive DNA-binding regions (H-T-H motif) follow at residues 278–299 (WAAKDMLFMNPDYLGKLFKQET) and 327–351 (VSEIAEEIGFGDNPKYFSLVFKKYT).

Post-translationally, phosphorylated by YesM.

The protein resides in the cytoplasm. In terms of biological role, member of the two-component regulatory system YesM/YesN. This is an uncharacterized protein from Bacillus subtilis (strain 168).